We begin with the raw amino-acid sequence, 382 residues long: Mannitol-1-phosphate 5-dehydrogenase (382 aa).

3–14 (ALHFGAGNIGRG) is a binding site for NAD(+). Lys269 is subject to N6-acetyllysine.

This sequence belongs to the mannitol dehydrogenase family.

It catalyses the reaction D-mannitol 1-phosphate + NAD(+) = beta-D-fructose 6-phosphate + NADH + H(+). This chain is Mannitol-1-phosphate 5-dehydrogenase, found in Escherichia coli O45:K1 (strain S88 / ExPEC).